Reading from the N-terminus, the 295-residue chain is ATP synthase gamma chain (295 aa).

Belongs to the ATPase gamma chain family. F-type ATPases have 2 components, CF(1) - the catalytic core - and CF(0) - the membrane proton channel. CF(1) has five subunits: alpha(3), beta(3), gamma(1), delta(1), epsilon(1). CF(0) has three main subunits: a, b and c.

It localises to the cell inner membrane. Functionally, produces ATP from ADP in the presence of a proton gradient across the membrane. The gamma chain is believed to be important in regulating ATPase activity and the flow of protons through the CF(0) complex. This chain is ATP synthase gamma chain, found in Bdellovibrio bacteriovorus (strain ATCC 15356 / DSM 50701 / NCIMB 9529 / HD100).